The following is a 445-amino-acid chain: Histidine--tRNA ligase (445 aa).

Belongs to the class-II aminoacyl-tRNA synthetase family. In terms of assembly, homodimer.

The protein localises to the cytoplasm. The catalysed reaction is tRNA(His) + L-histidine + ATP = L-histidyl-tRNA(His) + AMP + diphosphate + H(+). The sequence is that of Histidine--tRNA ligase from Mycoplasma mobile (strain ATCC 43663 / 163K / NCTC 11711) (Mesomycoplasma mobile).